Reading from the N-terminus, the 100-residue chain is NADH-quinone oxidoreductase subunit K (100 aa).

A run of 3 helical transmembrane segments spans residues 2–22 (IPLQ…LTGV), 28–48 (LLFM…AFVV), and 60–80 (VMFI…LALL).

The protein belongs to the complex I subunit 4L family. In terms of assembly, NDH-1 is composed of 13 different subunits. Subunits NuoA, H, J, K, L, M, N constitute the membrane sector of the complex.

It localises to the cell inner membrane. It catalyses the reaction a quinone + NADH + 5 H(+)(in) = a quinol + NAD(+) + 4 H(+)(out). In terms of biological role, NDH-1 shuttles electrons from NADH, via FMN and iron-sulfur (Fe-S) centers, to quinones in the respiratory chain. The immediate electron acceptor for the enzyme in this species is believed to be ubiquinone. Couples the redox reaction to proton translocation (for every two electrons transferred, four hydrogen ions are translocated across the cytoplasmic membrane), and thus conserves the redox energy in a proton gradient. This Erwinia tasmaniensis (strain DSM 17950 / CFBP 7177 / CIP 109463 / NCPPB 4357 / Et1/99) protein is NADH-quinone oxidoreductase subunit K.